Here is a 1164-residue protein sequence, read N- to C-terminus: Phospholipid-transporting ATPase IA (1164 aa).

Residues 1-75 (MPTMRRTVSE…PRFLYSQFRR (75 aa)) lie on the Cytoplasmic side of the membrane. Residue Ser25 is modified to Phosphoserine. Position 28 is a phosphothreonine (Thr28). Ser29 is subject to Phosphoserine. The helical transmembrane segment at 76 to 96 (AANSFFLFIALLQQIPDVSPT) threads the bilayer. At 97–100 (GRYT) the chain is on the exoplasmic loop side. The chain crosses the membrane as a helical span at residues 101–121 (TLVPLLFILAVAAIKEIIEDI). Residues 122 to 297 (KRHKADNAVN…SNVERITNVQ (176 aa)) lie on the Cytoplasmic side of the membrane. A helical transmembrane segment spans residues 298 to 318 (ILILFCILIAMSLVCSVGSAI). Residues 319–339 (WNRRHSGKDWYLHLHYGGASN) are Exoplasmic loop-facing. Residues 340–360 (FGLNFLTFIILFNNLIPISLL) traverse the membrane as a helical segment. Over 361–866 (VTLEVVKFTQ…KCILYCFYKN (506 aa)) the chain is Cytoplasmic. Asp409 functions as the 4-aspartylphosphate intermediate in the catalytic mechanism. Positions 409, 410, and 411 each coordinate ATP. Asp409 contributes to the Mg(2+) binding site. Position 411 (Thr411) interacts with Mg(2+). Ser443 carries the phosphoserine modification. ATP-binding positions include Glu508, Phe549, Lys572, Arg605, Thr685, Gly686, Asp687, 741 to 748 (ALIIDGKT), Arg775, and Lys781. Residue Asp801 participates in Mg(2+) binding. Asn804 and Asp805 together coordinate ATP. A Mg(2+)-binding site is contributed by Asp805. A helical membrane pass occupies residues 867–887 (IVLYIIEIWFAFVNGFSGQIL). Topologically, residues 888–890 (FER) are exoplasmic loop. The helical transmembrane segment at 891–911 (WCIGLYNVMFTAMPPLTLGIF) threads the bilayer. Over 912 to 939 (ERSCRKENMLKYPELYKTSQNALDFNTK) the chain is Cytoplasmic. The helical transmembrane segment at 940–960 (VFWVHCLNGLFHSVILFWFPL) threads the bilayer. The Exoplasmic loop portion of the chain corresponds to 961 to 977 (KALQYGTVFGNGKTSDY). Residues 978–998 (LLLGNFVYTFVVITVCLKAGL) traverse the membrane as a helical segment. Over 999–1008 (ETSYWTWFSH) the chain is Cytoplasmic. The chain crosses the membrane as a helical span at residues 1009 to 1029 (IAIWGSIALWVVFFGIYSSLW). The Exoplasmic loop segment spans residues 1030-1044 (PAVPMAPDMSGEAAM). A helical membrane pass occupies residues 1045-1065 (LFSSGVFWVGLLSIPVASLLL). At 1066-1164 (DVLYKVIKRT…DTTKQRPDEW (99 aa)) the chain is on the cytoplasmic side. Residue 1095-1102 (GAVVLGKS) participates in ATP binding. Ser1126 is subject to Phosphoserine.

It belongs to the cation transport ATPase (P-type) (TC 3.A.3) family. Type IV subfamily. As to quaternary structure, component of a P4-ATPase flippase complex which consists of a catalytic alpha subunit and an accessory beta subunit. Interacts with TMEM30A to form a flippase complex; this complex forms an intermediate phosphoenzyme. Interacts with TMEM30B; this interaction is reported conflictingly. Requires Mg(2+) as cofactor. Cleaved by calpain in a caspase- and calcium influx-dependent manner only during platelet apoptosis and may lead to inactivation. Found in most tissues except liver and testis. Most abundant in brain and lung. Also detected in fetal tissues. Isoform 1 is expressed in brain. Isoform 2 and isoform 3 are expressed in reticulocytes. Expressed in mouse hippocampus in both dentate gyrus (DG) and the CA3 regions. Expressed in both neuronal as well as non-neuronal cells within the DG. Highly expressed in platelets.

It localises to the cytoplasmic vesicle. The protein localises to the secretory vesicle. Its subcellular location is the chromaffin granule membrane. The protein resides in the cytoplasmic granule. It is found in the cell membrane. It localises to the endoplasmic reticulum. The protein localises to the golgi apparatus. Its subcellular location is the endomembrane system. The catalysed reaction is ATP + H2O + phospholipidSide 1 = ADP + phosphate + phospholipidSide 2.. It catalyses the reaction a 1,2-diacyl-sn-glycero-3-phospho-L-serine(out) + ATP + H2O = a 1,2-diacyl-sn-glycero-3-phospho-L-serine(in) + ADP + phosphate + H(+). Its activity is regulated as follows. ATPase activity is stimulated by phosphatidylserine (PS) and minimally by phosphatidylethanolamine (PE). ATPase activity is inhibited by the vanadate and by the presence of calcium. Its function is as follows. Catalytic component of a P4-ATPase flippase complex which catalyzes the hydrolysis of ATP coupled to the transport of aminophospholipids from the outer to the inner leaflet of various membranes and ensures the maintenance of asymmetric distribution of phospholipids. Phospholipid translocation also seems to be implicated in vesicle formation and in uptake of lipid signaling molecules. In vitro, its ATPase activity is selectively and stereospecifically stimulated by phosphatidylserine (PS). The flippase complex ATP8A1:TMEM30A seems to play a role in regulation of cell migration probably involving flippase-mediated translocation of phosphatidylethanolamine (PE) at the cell membrane. Acts as aminophospholipid translocase at the cell membrane in neuronal cells; the activity is associated with hippocampus-dependent learning. May play a role in brain connectivity. In Mus musculus (Mouse), this protein is Phospholipid-transporting ATPase IA.